A 173-amino-acid polypeptide reads, in one-letter code: MKGFGWLEGLLRVGRKLFVKAETVQYPEVRPYLPPRSRGRIVLTRDPDGQERCVACNLCAVACPVGCIDLAKAVAEDGRWYPEHFRINFARCIFCGYCEEACPTAAIQLTPDFELSEWRRDALVYDKHDLLIAGEGKVRGYRYWSVAGKAIQGKDKGEADHEAPPVDLKGLLP.

2 consecutive 4Fe-4S ferredoxin-type domains span residues 41 to 73 (IVLTRDPDGQERCVACNLCAVACPVGCIDLAKA) and 83 to 112 (EHFRINFARCIFCGYCEEACPTAAIQLTPD). Cys-53, Cys-56, Cys-59, Cys-63, Cys-92, Cys-95, Cys-98, and Cys-102 together coordinate [4Fe-4S] cluster.

The protein belongs to the complex I 23 kDa subunit family. In terms of assembly, NDH-1 is composed of 14 different subunits. Subunits NuoA, H, J, K, L, M, N constitute the membrane sector of the complex. [4Fe-4S] cluster is required as a cofactor.

It is found in the cell inner membrane. It catalyses the reaction a quinone + NADH + 5 H(+)(in) = a quinol + NAD(+) + 4 H(+)(out). Its function is as follows. NDH-1 shuttles electrons from NADH, via FMN and iron-sulfur (Fe-S) centers, to quinones in the respiratory chain. The immediate electron acceptor for the enzyme in this species is believed to be ubiquinone. Couples the redox reaction to proton translocation (for every two electrons transferred, four hydrogen ions are translocated across the cytoplasmic membrane), and thus conserves the redox energy in a proton gradient. In Rhodopseudomonas palustris (strain BisA53), this protein is NADH-quinone oxidoreductase subunit I 1.